Here is a 661-residue protein sequence, read N- to C-terminus: Ubiquitin carboxyl-terminal hydrolase 51 (661 aa).

Positions 1 to 144 (MRGTQGAQEM…SENSLLEVGS (144 aa)) are disordered. Polar residues predominate over residues 21–30 (TSENLTSRGS). The segment covering 53–71 (PRRKPRPRPQPRSRSRGGR) has biased composition (basic residues). A compositionally biased stretch (pro residues) spans 75–96 (APPPPPAKPPPPPPAPPPPPLP). The UBP-type zinc finger occupies 149 to 267 (TGCCHVESFK…KETKEKILGL (119 aa)). Zn(2+) is bound by residues cysteine 151, histidine 153, cysteine 192, cysteine 195, cysteine 205, cysteine 208, cysteine 213, histidine 218, histidine 222, histidine 228, cysteine 241, and cysteine 244. In terms of domain architecture, USP spans 320-656 (RGLINLGNTC…EGYLLFYHRQ (337 aa)). Cysteine 329 acts as the Nucleophile in catalysis. Residue histidine 615 is the Proton acceptor of the active site.

Belongs to the peptidase C19 family. In terms of assembly, interacts with H2A.

Its subcellular location is the chromosome. The enzyme catalyses Thiol-dependent hydrolysis of ester, thioester, amide, peptide and isopeptide bonds formed by the C-terminal Gly of ubiquitin (a 76-residue protein attached to proteins as an intracellular targeting signal).. Its function is as follows. Specifically deubiquitinates 'Lys-14' (H2AK13Ub) and 'Lys-16'(H2AK15Ub) of histone H2A regulating the DNA damage response at double-strand breaks (DSBs). USP51 is recruited to chromatin after DNA damage and regulates the dynamic assembly/disassembly of TP53BP1 and BRCA1. Functions in DNA double-strand break repair also by mediating the deubiquitination and subsequent stabilization of DGCR8, leading to the recruitment of DGCR8 binding partners to double strand breaks such as RNF168 or MDC1. In addition, promotes the deubiquitination and stabilization of the transcriptional repressor ZEB1. The polypeptide is Ubiquitin carboxyl-terminal hydrolase 51 (Mus musculus (Mouse)).